A 162-amino-acid polypeptide reads, in one-letter code: Large ribosomal subunit protein uL10 (162 aa).

Belongs to the universal ribosomal protein uL10 family. Part of the ribosomal stalk of the 50S ribosomal subunit. The N-terminus interacts with L11 and the large rRNA to form the base of the stalk. The C-terminus forms an elongated spine to which L12 dimers bind in a sequential fashion forming a multimeric L10(L12)X complex.

Forms part of the ribosomal stalk, playing a central role in the interaction of the ribosome with GTP-bound translation factors. In Mycoplasma genitalium (strain ATCC 33530 / DSM 19775 / NCTC 10195 / G37) (Mycoplasmoides genitalium), this protein is Large ribosomal subunit protein uL10 (rplJ).